The sequence spans 195 residues: MKKKETAWMKRKQLLYTEERKWEYGTILIEDGICLIENGEGDILLADSLQHSPIWIHHKGKWEQAGFQDKLVLACGAENISLSGGERIRYEKSVKRPLMALLDSLDDETFLAFLQHLHSFGLSVFDCVFSYNKGVFSNTSAGQGVSFYHFSNDTAQCAMQHHYNYSSEGTGDRFEWTASNGKRSIMYTAVQRGRK.

This is an uncharacterized protein from Bacillus subtilis (strain 168).